A 344-amino-acid chain; its full sequence is Dihydroorotate dehydrogenase (quinone) (344 aa).

FMN contacts are provided by residues 65–69 (AGLDK) and threonine 89. A substrate-binding site is contributed by lysine 69. Substrate is bound at residue 114 to 118 (NRMGF). Residues asparagine 142 and asparagine 175 each contribute to the FMN site. Substrate is bound at residue asparagine 175. Serine 178 functions as the Nucleophile in the catalytic mechanism. Asparagine 180 provides a ligand contact to substrate. FMN is bound by residues lysine 220 and threonine 248. Residue 249-250 (NT) participates in substrate binding. FMN is bound by residues glycine 271, glycine 300, and 321–322 (YT).

Belongs to the dihydroorotate dehydrogenase family. Type 2 subfamily. In terms of assembly, monomer. Requires FMN as cofactor.

It localises to the cell membrane. The enzyme catalyses (S)-dihydroorotate + a quinone = orotate + a quinol. It participates in pyrimidine metabolism; UMP biosynthesis via de novo pathway; orotate from (S)-dihydroorotate (quinone route): step 1/1. Catalyzes the conversion of dihydroorotate to orotate with quinone as electron acceptor. This is Dihydroorotate dehydrogenase (quinone) from Paraburkholderia phymatum (strain DSM 17167 / CIP 108236 / LMG 21445 / STM815) (Burkholderia phymatum).